Consider the following 318-residue polypeptide: Mitochondrial thiamine pyrophosphate carrier 1 (318 aa).

The next 6 membrane-spanning stretches (helical) occupy residues Gly-12 to Ser-28, Leu-91 to Thr-107, Ser-125 to Tyr-141, Gly-181 to Phe-197, Ala-221 to Leu-237, and Gly-284 to Trp-301. 3 Solcar repeats span residues Gly-12 to Ala-110, Pro-120 to Val-206, and Pro-214 to Tyr-309.

It belongs to the mitochondrial carrier (TC 2.A.29) family.

The protein localises to the mitochondrion inner membrane. Functionally, mitochondrial transporter that mediates uptake of thiamine pyrophosphate (ThPP) into mitochondria. The chain is Mitochondrial thiamine pyrophosphate carrier 1 (tpc1) from Aspergillus oryzae (strain ATCC 42149 / RIB 40) (Yellow koji mold).